The sequence spans 644 residues: MASSIDPLTRLHGILSSYLSEVLGVDRSVVERLLAPPPRKEYGDLGFPLMRFARSSNASADSIVESLRGKLWERGITWASPTLEAGYLNIVFDVEKLGDEVFRLLASGWRPSTARTSRPETIVVEHTSANPIHPLHLGHARNSSLGDALARLLEARGHRVNRRFYVDDVGRQAVVASLGFKLSGVTPRELASRMGVKVDHAVGWVYAVTHNALETVTARKRGDTSKVDEALSTLARLKERGDREVFDRILEAVGSLDDPEGLVSEMMRKYERGEEPEKSLIRGVVSAVLEGFRETLGRFGVDFDDWDWESDLLWSGLVNKIIEEARRSPFLTTHKDAIALDIPRIVREVLARDPEAASTIKLPRSLEIPPLILVRSDGTTLYTTRDLAYSVYKFRVTGADRVINVIGADQRLPQLQIRLALLGLGYRREALNMMHYDYEIVSLPGRRMSSRRGEYVTLDELLEMAKARSVREVESRNPGADRDWIESTAEKIAVGAVRFALVRPGRLKPITLDVERILDLKENTAPYLQYTYARASSILEKHGEIDYLKAHPASLEEGSRRELFVEALRFPLVSAKAADDLAPEDLASYLLRLADMFNSWYQKDSVIHEEWEGARHAKAALVLLVKSVIGEGLRLLGVEPLEKM.

The short motif at 129–139 is the 'HIGH' region element; sequence ANPIHPLHLGH.

This sequence belongs to the class-I aminoacyl-tRNA synthetase family.

It localises to the cytoplasm. It catalyses the reaction tRNA(Arg) + L-arginine + ATP = L-arginyl-tRNA(Arg) + AMP + diphosphate. The polypeptide is Arginine--tRNA ligase (argS) (Aeropyrum pernix (strain ATCC 700893 / DSM 11879 / JCM 9820 / NBRC 100138 / K1)).